We begin with the raw amino-acid sequence, 277 residues long: 3-methyl-2-oxobutanoate hydroxymethyltransferase (277 aa).

Residues Asp58 and Asp97 each coordinate Mg(2+). 3-methyl-2-oxobutanoate is bound by residues 58 to 59 (DS), Asp97, and Lys127. A Mg(2+)-binding site is contributed by Glu129. The active-site Proton acceptor is the Glu195.

It belongs to the PanB family. As to quaternary structure, homodecamer; pentamer of dimers. Mg(2+) is required as a cofactor.

It is found in the cytoplasm. The catalysed reaction is 3-methyl-2-oxobutanoate + (6R)-5,10-methylene-5,6,7,8-tetrahydrofolate + H2O = 2-dehydropantoate + (6S)-5,6,7,8-tetrahydrofolate. The protein operates within cofactor biosynthesis; (R)-pantothenate biosynthesis; (R)-pantoate from 3-methyl-2-oxobutanoate: step 1/2. Catalyzes the reversible reaction in which hydroxymethyl group from 5,10-methylenetetrahydrofolate is transferred onto alpha-ketoisovalerate to form ketopantoate. The sequence is that of 3-methyl-2-oxobutanoate hydroxymethyltransferase from Leifsonia xyli subsp. xyli (strain CTCB07).